A 239-amino-acid polypeptide reads, in one-letter code: Uridylate kinase (239 aa).

Position 10-13 (10-13) interacts with ATP; the sequence is KISG. Positions 18–23 are involved in allosteric activation by GTP; it reads GESGYG. UMP is bound at residue glycine 52. ATP-binding residues include glycine 53 and arginine 57. Residues aspartate 72 and 133–140 each bind UMP; that span reads TGNPYFTT. ATP contacts are provided by threonine 160, tyrosine 166, and aspartate 169.

Belongs to the UMP kinase family. In terms of assembly, homohexamer.

It is found in the cytoplasm. The enzyme catalyses UMP + ATP = UDP + ADP. It functions in the pathway pyrimidine metabolism; CTP biosynthesis via de novo pathway; UDP from UMP (UMPK route): step 1/1. Allosterically activated by GTP. Inhibited by UTP. In terms of biological role, catalyzes the reversible phosphorylation of UMP to UDP. In Chlorobaculum tepidum (strain ATCC 49652 / DSM 12025 / NBRC 103806 / TLS) (Chlorobium tepidum), this protein is Uridylate kinase.